Reading from the N-terminus, the 106-residue chain is Integration host factor subunit alpha (106 aa).

It belongs to the bacterial histone-like protein family. In terms of assembly, heterodimer of an alpha and a beta chain.

Its function is as follows. This protein is one of the two subunits of integration host factor, a specific DNA-binding protein that functions in genetic recombination as well as in transcriptional and translational control. In Methylobacterium radiotolerans (strain ATCC 27329 / DSM 1819 / JCM 2831 / NBRC 15690 / NCIMB 10815 / 0-1), this protein is Integration host factor subunit alpha.